The sequence spans 68 residues: uncharacterized protein (68 aa).

Positions 1-28 (MNKEQSADDPSVDLIRVKNMLNSTISMS) are cleaved as a signal peptide.

This is an uncharacterized protein from Escherichia coli (strain K12).